The primary structure comprises 98 residues: Small ribosomal subunit protein eS24 (98 aa).

The protein belongs to the eukaryotic ribosomal protein eS24 family.

The protein is Small ribosomal subunit protein eS24 of Thermococcus sibiricus (strain DSM 12597 / MM 739).